Reading from the N-terminus, the 821-residue chain is E3 ubiquitin-protein ligase RSP5 (821 aa).

The C2 domain occupies Met-1–Arg-112. 2 stretches are compositionally biased toward polar residues: residues Thr-133–Asn-144 and Leu-188–Ser-201. Disordered regions lie at residues Thr-133–Arg-239 and Arg-255–Asp-359. Over residues Gln-202–Gly-217 the composition is skewed to low complexity. The region spanning Gly-231 to Ala-264 is the WW 1 domain. A compositionally biased stretch (polar residues) spans Arg-255 to Arg-272. A compositionally biased stretch (basic and acidic residues) spans Leu-281–Thr-296. Residues Gly-297–Thr-312 are compositionally biased toward polar residues. Over residues Ala-320 to Gly-339 the composition is skewed to low complexity. 2 WW domains span residues Gly-339–Arg-372 and Gly-399–Leu-432. The HECT domain maps to Ser-488 to Glu-821. Catalysis depends on Cys-789, which acts as the Glycyl thioester intermediate.

Belongs to the RSP5/NEDD4 family. In terms of assembly, interacts with apyA and creD.

Its subcellular location is the cytoplasm. It catalyses the reaction S-ubiquitinyl-[E2 ubiquitin-conjugating enzyme]-L-cysteine + [acceptor protein]-L-lysine = [E2 ubiquitin-conjugating enzyme]-L-cysteine + N(6)-ubiquitinyl-[acceptor protein]-L-lysine.. Its pathway is protein modification; protein ubiquitination. E3 ubiquitin-protein ligase which accepts ubiquitin from an E2 ubiquitin-conjugating enzyme in the form of a thioester and then directly transfers the ubiquitin to targeted substrates. Probably involved in the regulatory network controlling carbon source utilization. Ubiquitinates 'Lys-528' of the uric acid/xanthine transporter uapA at the cell membrane, leading to its internalization, sorting into the endosomal pathway to the vacuolar lumen where it is eventually degraded. The protein is E3 ubiquitin-protein ligase RSP5 (hulA) of Emericella nidulans (strain FGSC A4 / ATCC 38163 / CBS 112.46 / NRRL 194 / M139) (Aspergillus nidulans).